The chain runs to 461 residues: MNKFKFFIVFLILSLVFLQNEYAFGSSLNEELSYYSVEYDNAKTFKESIKQKNIELTYKIPELHTAQIKTSKSKLNSLIKSNKNVKFVNPTCSTCVVEKSVKTGKNLNNKKNGSHDLFDRQWDMRKITNEGKSYKLSPDRKKAKVALVDSGVNSSHTDLKSINKIVNEVPKNGFRGSENDESGNKNFEEDKLNHGTLVAGQIGANGNLKGVNPGVEMNVYRVFGSKKSEMLWVSKGIIDAANDDNDVINVSLGNYLIKDNQNKKKLRDDEKVDYDALQKAINYAQKKGSIVVAAVGNDGINVKKVKEINKKRNLNSKTSKKVYDSPANLNNVMTVGSIDDNDYISEFSNYGNNFIDLMTIGGSYKLLDKYGKDAWLEKGYMQKQSVLSTSSNGRYIYQSGTSLAAPKVSGALALEIDKYQLKDQPETAIELFKKKGIEKEKYMDKKHYGNGKLDVYKLLKE.

The first 23 residues, 1–23, serve as a signal peptide directing secretion; the sequence is MNKFKFFIVFLILSLVFLQNEYA. In terms of domain architecture, Peptidase S8 spans 121 to 459; sequence QWDMRKITNE…NGKLDVYKLL (339 aa). Catalysis depends on charge relay system residues Asp149, His194, and Ser402.

Belongs to the peptidase S8 family.

It participates in antibiotic biosynthesis; epidermin biosynthesis. In terms of biological role, protease which cleaves the matured lantibiotic from the modified prepeptide. The protein is Epidermin leader peptide-processing serine protease EpiP (epiP) of Staphylococcus epidermidis.